Reading from the N-terminus, the 92-residue chain is Putative protein IntG (92 aa).

Belongs to the 'phage' integrase family.

This chain is Putative protein IntG (intG), found in Escherichia coli (strain K12).